Consider the following 91-residue polypeptide: MTKELCMRCYISGRVQGVWFRASAKKLAEQLMISGWARNLADGRVEVFACGKEDKLEEFYTWLQKGPLNARVDVCTRENLPWKDYISFDVL.

Residues 6-91 (CMRCYISGRV…WKDYISFDVL (86 aa)) form the Acylphosphatase-like domain. Catalysis depends on residues arginine 21 and asparagine 39.

It belongs to the acylphosphatase family.

The catalysed reaction is an acyl phosphate + H2O = a carboxylate + phosphate + H(+). The sequence is that of Acylphosphatase (acyP) from Legionella pneumophila (strain Paris).